The primary structure comprises 226 residues: SURF1-like protein (226 aa).

2 helical membrane passes run 3-23 (TNLVVLITFTILISLGFWQLS) and 199-219 (LEYALTWFGLAISLIVIYVIY).

This sequence belongs to the SURF1 family.

Its subcellular location is the cell membrane. The polypeptide is SURF1-like protein (Rickettsia felis (strain ATCC VR-1525 / URRWXCal2) (Rickettsia azadi)).